The primary structure comprises 563 residues: MAFNFNWSPLTADAEFYQRAQEMLTAALNKSPKPPIIKDDILVNELNLGSVPPDLEILEIGDLAEDRFRGIFKMCYSGDAFLTLKTRVQANPLNNHLFSKPSFTSPQPLAADAGLTIPLQITLSDIKLSAFIIVVFSKSKGLTLVFRNDPLESLKVSSTFDSIPFIKDYLQKEIEQQLRTLMMDELPAIIHRLSLRLWCPEYRAKEDQEMAEAAKKTKDEVAVDPFASPPQDAVDARGNVLDATEISNLSLDGGSEIHSLFSQKNLLRLAALTNSHRTLSLFTPSIRDAVFRAWAPSERGDSAGTTTPATPSLQRPQSSLGSQSTTYTFSNRSSDDGHGGIPSRPSLVNMNSATTGLSLGANRGSRSHPTRKKKNRVVNLRKPKTTESSESGESETASTTAVSEPTVPSRIPEEPEDLPVTPPSGKVRFNSIDLGDSPKKLPPSRSMTPEQVKMDQIPSLTVQPSTPINTQEQKRPAYNQSASTSYTPEKSAITPPHTPFSYPHGLHFSTTESPSGILEQAWIMKMASELARRQHDDKTARQGFWSTSSNGDDAPPAYEPKAL.

In terms of domain architecture, SMP-LTD spans M1 to L195. Disordered stretches follow at residues E298–P499 and A531–L563. Polar residues-rich tracts occupy residues A303–R332 and S346–L357. Basic residues predominate over residues S365–P383. Residues T386–V407 show a composition bias toward low complexity. Polar residues-rich tracts occupy residues P458 to Q471 and Y478 to P488. The span at A531–A540 shows a compositional bias: basic and acidic residues.

The protein belongs to the MDM34 family. In terms of assembly, component of the ER-mitochondria encounter structure (ERMES) or MDM complex, composed of MMM1, MDM10, MDM12 and MDM34.

The protein localises to the mitochondrion outer membrane. Its function is as follows. Component of the ERMES/MDM complex, which serves as a molecular tether to connect the endoplasmic reticulum (ER) and mitochondria. Components of this complex are involved in the control of mitochondrial shape and protein biogenesis, and function in nonvesicular lipid trafficking between the ER and mitochondria. MDM34 is required for the interaction of the ER-resident membrane protein MMM1 and the outer mitochondrial membrane-resident beta-barrel protein MDM10. The chain is Mitochondrial distribution and morphology protein 34 from Botryotinia fuckeliana (strain B05.10) (Noble rot fungus).